We begin with the raw amino-acid sequence, 249 residues long: AA9 family lytic polysaccharide monooxygenase A (249 aa).

An N-terminal signal peptide occupies residues 1–19; it reads MRGPLCFTLIAIAVTSVVA. The Cu(2+) site is built by histidine 20 and histidine 97. A disulfide bridge connects residues cysteine 60 and cysteine 183. Histidine 163 provides a ligand contact to O2. Tyrosine 180 is a Cu(2+) binding site.

This sequence belongs to the polysaccharide monooxygenase AA9 family. The cofactor is Cu(2+).

It localises to the secreted. The enzyme catalyses [(1-&gt;4)-beta-D-glucosyl]n+m + reduced acceptor + O2 = 4-dehydro-beta-D-glucosyl-[(1-&gt;4)-beta-D-glucosyl]n-1 + [(1-&gt;4)-beta-D-glucosyl]m + acceptor + H2O.. Functionally, lytic polysaccharide monooxygenase (LPMO) that depolymerizes crystalline and amorphous polysaccharides via the oxidation of scissile alpha- or beta-(1-4)-glycosidic bonds, yielding C4 oxidation products. Catalysis by LPMOs requires the reduction of the active-site copper from Cu(II) to Cu(I) by a reducing agent and H(2)O(2) or O(2) as a cosubstrate. Active on cellulose and cello-oligosaccharides, as well as plant cell wall-derived hemicellulosic polysaccharides. Also active on cello-oligosaccharides such as cellohexaose, cellopentaose or cellotetraose. This Armillaria gallica (Bulbous honey fungus) protein is AA9 family lytic polysaccharide monooxygenase A.